Reading from the N-terminus, the 163-residue chain is 3-hydroxyacyl-[acyl-carrier-protein] dehydratase FabZ (163 aa).

The active site involves His-64.

This sequence belongs to the thioester dehydratase family. FabZ subfamily.

It localises to the cytoplasm. The catalysed reaction is a (3R)-hydroxyacyl-[ACP] = a (2E)-enoyl-[ACP] + H2O. In terms of biological role, involved in unsaturated fatty acids biosynthesis. Catalyzes the dehydration of short chain beta-hydroxyacyl-ACPs and long chain saturated and unsaturated beta-hydroxyacyl-ACPs. The chain is 3-hydroxyacyl-[acyl-carrier-protein] dehydratase FabZ from Caulobacter sp. (strain K31).